We begin with the raw amino-acid sequence, 397 residues long: MSKIIAINAGSSSLKFQLFEMPSETVLTKGLVERIGLEDSIFTITVDGEKQKEITNIPDHAVAVNMLLKKLTENGIVKSLDEIGGIGHRVVHGGEKFADSVLITDEVLADIEELSDLAPLHNPANVVGIKAFQEVLPNVPAVAVFDTAFHQTMPESAFLYSLPYEYYEKFGIRKYGFHGTSHKYVTERAAELLGRPLESLSLLSCHLGNGASIAAVEGGKSIDTSMGFTPLAGVTMGTRSGNIDPALIPYIMEKTGQTVEEVVSVLNKKSGMLGLTGYSSDLRDIIAKEEEGDHRAKVALDVFVSRIHKYIGSYTARMKGVDAIIFTAGVGENSAIIRERVLEGLEYMGVYFDAKRNNVFGEEAFINFPHSPVKIIVIPTDEEVMIARDVLRLGNID.

Asparagine 8 provides a ligand contact to Mg(2+). An ATP-binding site is contributed by lysine 15. A substrate-binding site is contributed by arginine 89. Aspartate 146 functions as the Proton donor/acceptor in the catalytic mechanism. ATP-binding positions include histidine 206–glycine 210, aspartate 281–arginine 283, and glycine 329–asparagine 333. Residue glutamate 382 coordinates Mg(2+).

Belongs to the acetokinase family. Homodimer. Requires Mg(2+) as cofactor. Mn(2+) is required as a cofactor.

The protein localises to the cytoplasm. It catalyses the reaction acetate + ATP = acetyl phosphate + ADP. Its pathway is metabolic intermediate biosynthesis; acetyl-CoA biosynthesis; acetyl-CoA from acetate: step 1/2. Its function is as follows. Catalyzes the formation of acetyl phosphate from acetate and ATP. Can also catalyze the reverse reaction. The sequence is that of Acetate kinase from Bacillus thuringiensis subsp. konkukian (strain 97-27).